The sequence spans 525 residues: Chromosomal replication initiator protein DnaA (525 aa).

Residues 1–71 are domain I, interacts with DnaA modulators; sequence MNDFWQHCSA…SDLAREFWNT (71 aa). A domain II region spans residues 71-188; sequence TPIEVQFVLD…GEADSMYERS (118 aa). The interval 160 to 182 is disordered; it reads AAAGRRTWRPGPGAAPANGGEAD. The segment covering 169 to 181 has biased composition (low complexity); that stretch reads PGPGAAPANGGEA. Positions 189-405 are domain III, AAA+ region; it reads KLNPVLTFDN…GALRKILAYS (217 aa). Residues Gly233, Gly235, Lys236, and Thr237 each contribute to the ATP site. Residues 406-525 are domain IV, binds dsDNA; sequence KFHGREISIE…LHVLEQTLKG (120 aa).

The protein belongs to the DnaA family. As to quaternary structure, oligomerizes as a right-handed, spiral filament on DNA at oriC.

Its subcellular location is the cytoplasm. Its function is as follows. Plays an essential role in the initiation and regulation of chromosomal replication. ATP-DnaA binds to the origin of replication (oriC) to initiate formation of the DNA replication initiation complex once per cell cycle. Binds the DnaA box (a 9 base pair repeat at the origin) and separates the double-stranded (ds)DNA. Forms a right-handed helical filament on oriC DNA; dsDNA binds to the exterior of the filament while single-stranded (ss)DNA is stabiized in the filament's interior. The ATP-DnaA-oriC complex binds and stabilizes one strand of the AT-rich DNA unwinding element (DUE), permitting loading of DNA polymerase. After initiation quickly degrades to an ADP-DnaA complex that is not apt for DNA replication. Binds acidic phospholipids. The chain is Chromosomal replication initiator protein DnaA from Burkholderia orbicola (strain MC0-3).